A 561-amino-acid polypeptide reads, in one-letter code: Putative transport protein KPN78578_08530 (561 aa).

5 helical membrane passes run 8–28, 37–57, 66–86, 94–114, and 158–178; these read LLNG…LCLG, LGNS…HFAI, FMLF…SIFF, MLAL…GKVF, and HLSL…IVGA. 2 RCK C-terminal domains span residues 202 to 288 and 292 to 373; these read LDTD…SFRN and VFDR…RIGF. The next 5 helical transmembrane spans lie at 383 to 403, 406 to 426, 447 to 467, 478 to 498, and 540 to 560; these read LLAF…TFQF, FSFG…LGFL, FGLM…INNG, AGLI…AYVL, and AIAN…WPGL.

The protein belongs to the AAE transporter (TC 2.A.81) family. YbjL subfamily.

It localises to the cell membrane. The polypeptide is Putative transport protein KPN78578_08530 (Klebsiella pneumoniae subsp. pneumoniae (strain ATCC 700721 / MGH 78578)).